The following is a 425-amino-acid chain: Paired box pox-neuro protein (425 aa).

Positions 5–132 form a DNA-binding region, paired; the sequence is GQAGVNQLGG…SSINRILRNS (128 aa). A PAI subdomain region spans residues 8–64; it reads GVNQLGGVFVNGRPLPDCVRRRIVDLALCGVRPCDISRQLLVSHGCVSKILTRFYET. An RED subdomain region spans residues 84-132; that stretch reads TVVKKIIRLKEENSGMFAWEIREQLQQQRVCDPSSVPSISSINRILRNS. 3 disordered regions span residues 159 to 188, 297 to 358, and 383 to 425; these read QAGSGPSNGYGGQAPPPPVTVAPPTPAATP, TKSE…RKRN, and LESS…EVVN. Residues 172–185 show a composition bias toward pro residues; the sequence is APPPPVTVAPPTPA. 2 stretches are compositionally biased toward low complexity: residues 323–332 and 340–349; these read SSPAALSLTA and GSAPEASPGS. Positions 402–425 are enriched in acidic residues; the sequence is TPEDEDPAEAEEEQEEEDSVEVVN.

As to expression, central and peripheral nervous systems.

The protein localises to the nucleus. Its function is as follows. Transcriptional regulator that specifies poly-innervated organs (chemosensory bristle). Also controls the number of neurons. The protein is Paired box pox-neuro protein (Poxn) of Drosophila melanogaster (Fruit fly).